The chain runs to 270 residues: UPF0246 protein Psyc_0554 (270 aa).

It belongs to the UPF0246 family.

This is UPF0246 protein Psyc_0554 from Psychrobacter arcticus (strain DSM 17307 / VKM B-2377 / 273-4).